The sequence spans 443 residues: Probable glycine dehydrogenase (decarboxylating) subunit 1 (443 aa).

This sequence belongs to the GcvP family. N-terminal subunit subfamily. In terms of assembly, the glycine cleavage system is composed of four proteins: P, T, L and H. In this organism, the P 'protein' is a heterodimer of two subunits.

It carries out the reaction N(6)-[(R)-lipoyl]-L-lysyl-[glycine-cleavage complex H protein] + glycine + H(+) = N(6)-[(R)-S(8)-aminomethyldihydrolipoyl]-L-lysyl-[glycine-cleavage complex H protein] + CO2. The glycine cleavage system catalyzes the degradation of glycine. The P protein binds the alpha-amino group of glycine through its pyridoxal phosphate cofactor; CO(2) is released and the remaining methylamine moiety is then transferred to the lipoamide cofactor of the H protein. The protein is Probable glycine dehydrogenase (decarboxylating) subunit 1 of Nitratidesulfovibrio vulgaris (strain ATCC 29579 / DSM 644 / CCUG 34227 / NCIMB 8303 / VKM B-1760 / Hildenborough) (Desulfovibrio vulgaris).